Reading from the N-terminus, the 1225-residue chain is Mediator of RNA polymerase II transcription subunit 13 (1225 aa).

This sequence belongs to the Mediator complex subunit 13 family. In terms of assembly, component of the srb8-11 complex which consists of rb8, srb9(TRAP240), srb10 and srb11. The srb8-11 complex associates with the Mediator complex thereby blocking association with RNA polymerase II and leading to reduced transcriptional activation by Mediator.

The protein resides in the nucleus. Functionally, component of the srb8-11 complex. The srb8-11 complex is a regulatory module of the Mediator complex which is itself involved in regulation of basal and activated RNA polymerase II-dependent transcription. The srb8-11 complex may be involved in the transcriptional repression of a subset of genes regulated by Mediator. It may inhibit the association of the Mediator complex with RNA polymerase II to form the holoenzyme complex. In Schizosaccharomyces pombe (strain 972 / ATCC 24843) (Fission yeast), this protein is Mediator of RNA polymerase II transcription subunit 13 (srb9).